We begin with the raw amino-acid sequence, 337 residues long: Ral GTPase-activating protein subunit alpha-1 (337 aa).

In terms of assembly, component of the heterodimeric RalGAP1 complex with RALGAPB. Heterodimerization is required for activity. Interacts with the HLH region of TCF3/isoform E12.

It localises to the cytoplasm. The protein localises to the nucleus. In terms of biological role, catalytic subunit of the heterodimeric RalGAP1 complex which acts as a GTPase activator for the Ras-like small GTPases RALA and RALB. In Sus scrofa (Pig), this protein is Ral GTPase-activating protein subunit alpha-1.